Consider the following 362-residue polypeptide: Replication-associated protein (362 aa).

The CRESS-DNA virus Rep endonuclease domain maps to 8 to 116; the sequence is RINAKNYFLT…DGDTLEWGEF (109 aa). An RCR-1 motif is present at residues 15-18; it reads FLTY. Residues Glu-49, His-57, and His-59 each contribute to the a divalent metal cation site. Positions 57 to 59 match the RCR-2 motif; the sequence is HLH. The active-site For DNA cleavage activity is Tyr-103. The RCR-3 motif lies at 103–106; the sequence is YLEK. A divalent metal cation is bound at residue Asp-107. Residues 143-153 are binding to RBR1; that stretch reads KSEALNVLREL. The oligomerization stretch occupies residues 156–176; the sequence is KDYVLQFHNLNSNLDRIFTPP. 221 to 228 contributes to the ATP binding site; that stretch reads GESRTGKT. Residues 341 to 362 form a disordered region; sequence YSGTYQGPTQNSEEEVHPEEEN. Acidic residues predominate over residues 352–362; it reads SEEEVHPEEEN.

Belongs to the geminiviridae Rep protein family. In terms of assembly, homooligomer. Interacts with the replication enhancer protein (REn). Interacts with host retinoblastoma-related protein 1 (RBR1), and may thereby induce the transcription of host replicative enzymes even if the cell is not dividing anymore. Interacts with host PCNA. Interacts with host SCE1 protein. Binds to host RAD54 protein to ensure geminiviral replication. It depends on Mg(2+) as a cofactor. Mn(2+) serves as cofactor.

It is found in the host nucleus. Functionally, essential for the replication of viral ssDNA. The closed circular ssDNA genome is first converted to a superhelical dsDNA. Rep binds a specific region at the genome origin of replication. It introduces an endonucleolytic nick within the conserved sequence 5'-TAATATTAC-3' in the intergenic region of the genome present in all geminiviruses, thereby initiating the rolling circle replication (RCR). Following cleavage, binds covalently to the 5'-phosphate of DNA as a tyrosyl ester. The cleavage gives rise to a free 3'-OH that serves as a primer for the cellular DNA polymerase. The polymerase synthesizes the (+) strand DNA by rolling circle mechanism. After one round of replication, a Rep-catalyzed nucleotidyl transfer reaction releases a circular single-stranded virus genome, thereby terminating the replication. Displays origin-specific DNA cleavage, nucleotidyl transferase, ATPase and helicase activities. The sequence is that of Replication-associated protein from Cynanchum acutum (Little mallow).